A 176-amino-acid chain; its full sequence is MKVLLCDLLLLSLFSSVFSSCQRDCLTCQEKLHPALDSFDLEVCILECEEKVFPSPLWTPCTKVMARSSWQLSPAAPEHVAAALYQPRASEMQHLRRMPRVRSLFQEQEEPEPGMEEAGEMEQKQLQKRFGGFTGARKSARKLANQKRFSEFMRQYLVLSMQSSQRRRTLHQNGNV.

An N-terminal signal peptide occupies residues 1–19 (MKVLLCDLLLLSLFSSVFS). Propeptides lie at residues 20 to 95 (SCQR…MQHL) and 169 to 176 (TLHQNGNV).

Belongs to the opioid neuropeptide precursor family. Post-translationally, specific enzymatic cleavages at paired basic residues probably yield other active peptides besides nociceptin. In terms of processing, the N-terminal domain contains 6 conserved cysteines thought to be involved in disulfide bonding and/or processing. Predominantly expressed in the brain and spinal cord. Also expressed and secreted by peripheral blood neutrophils following degranulation.

The protein resides in the secreted. Ligand of the opioid receptor-like receptor OPRL1. It may act as a transmitter in the brain by modulating nociceptive and locomotor behavior. May be involved in neuronal differentiation and development. Functionally, blocks nociceptin action in pain transmission by inhibiting nociceptin-induced hyperalgesia and allodynia. Its function is as follows. Has potent analgesic activity. This is Prepronociceptin (PNOC) from Homo sapiens (Human).